Reading from the N-terminus, the 457-residue chain is D-hydantoinase (457 aa).

Residues His57 and His59 each contribute to the Zn(2+) site. Phosphoserine is present on Ser69. Zn(2+) is bound at residue Lys148. N6-carboxylysine is present on Lys148. Tyr153 contributes to the substrate binding site. Zn(2+) is bound by residues His181 and His237. Position 286 (Thr286) interacts with substrate. Asp313 serves as a coordination point for Zn(2+). Asn335 is a substrate binding site.

This sequence belongs to the metallo-dependent hydrolases superfamily. Hydantoinase/dihydropyrimidinase family. As to quaternary structure, homotetramer. Zn(2+) is required as a cofactor. In terms of processing, carboxylation allows a single lysine to coordinate two zinc ions.

Its function is as follows. Catalyzes the stereospecific hydrolysis of the cyclic amide bond of D-hydantoin derivatives. The protein is D-hydantoinase (hyuA) of Rhizobium radiobacter (Agrobacterium tumefaciens).